We begin with the raw amino-acid sequence, 435 residues long: Amino acid transporter AVT6C (435 aa).

Residues 1–24 (MTPQIKTHLLPKQEPSSSENHGSS) form a disordered region. The next 11 membrane-spanning stretches (helical) occupy residues 28 to 48 (IVFN…PAAF), 53 to 73 (IVPA…SVGF), 100 to 120 (IAVQ…FSII), 148 to 168 (WNTR…PLVL), 181 to 201 (VSFL…ISAL), 219 to 239 (GSFW…TFHF), 260 to 280 (ISVI…YLLF), 307 to 327 (IVRL…NFSL), 354 to 374 (LALL…WYFF), 375 to 395 (QFMG…AIVL), and 408 to 428 (IVAA…ISTN).

The protein belongs to the amino acid/polyamine transporter 2 family. Amino acid/auxin permease (AAAP) (TC 2.A.18.6) subfamily.

The protein localises to the membrane. The chain is Amino acid transporter AVT6C from Arabidopsis thaliana (Mouse-ear cress).